Here is a 64-residue protein sequence, read N- to C-terminus: Large ribosomal subunit protein bL35 (64 aa).

Residues 1–41 (MPKMKSHSGASKRFKVSGKGKLLRQQANRRHLLEHKPSRRT) are disordered.

Belongs to the bacterial ribosomal protein bL35 family.

The sequence is that of Large ribosomal subunit protein bL35 from Nocardia farcinica (strain IFM 10152).